A 319-amino-acid chain; its full sequence is Methionyl-tRNA formyltransferase (319 aa).

A (6S)-5,6,7,8-tetrahydrofolate-binding site is contributed by 110–113 (SLLP).

The protein belongs to the Fmt family.

The enzyme catalyses L-methionyl-tRNA(fMet) + (6R)-10-formyltetrahydrofolate = N-formyl-L-methionyl-tRNA(fMet) + (6S)-5,6,7,8-tetrahydrofolate + H(+). Attaches a formyl group to the free amino group of methionyl-tRNA(fMet). The formyl group appears to play a dual role in the initiator identity of N-formylmethionyl-tRNA by promoting its recognition by IF2 and preventing the misappropriation of this tRNA by the elongation apparatus. The protein is Methionyl-tRNA formyltransferase of Geobacillus thermodenitrificans (strain NG80-2).